The chain runs to 342 residues: Aquaporin-8 (342 aa).

3 helical membrane passes run 55 to 75 (FLAV…AIFT), 98 to 118 (VAGG…FAVL), and 126 to 146 (CIFY…TMFA). The short motif at 108–110 (NPA) is the NPA 1 element. N-linked (GlcNAc...) asparagine glycosylation is present at N166. Helical transmembrane passes span 184–204 (TAFA…LAMC) and 215–235 (FLPI…SYNA). Positions 240–242 (NPS) match the NPA 2 motif. Residues 266–286 (YTWFFVPVLGSHCGAIIGGAI) form a helical membrane-spanning segment. Residues 302 to 327 (TNSVSSMSYNEDNSTLTKRKQVSNIV) are compositionally biased toward polar residues. The interval 302-342 (TNSVSSMSYNEDNSTLTKRKQVSNIVHDSKGAKGSSTAPVN) is disordered. N-linked (GlcNAc...) asparagine glycosylation occurs at N314.

It belongs to the MIP/aquaporin (TC 1.A.8) family.

The protein localises to the cell membrane. Functionally, aquaglyceroporin that may modulate the water content and osmolytes during anhydrobiosis. This is Aquaporin-8 from Milnesium tardigradum (Water bear).